The sequence spans 433 residues: tRNA(Ile)-lysidine synthase (433 aa).

Position 27–32 (27–32 (SGGLDS)) interacts with ATP.

It belongs to the tRNA(Ile)-lysidine synthase family.

Its subcellular location is the cytoplasm. It carries out the reaction cytidine(34) in tRNA(Ile2) + L-lysine + ATP = lysidine(34) in tRNA(Ile2) + AMP + diphosphate + H(+). Its function is as follows. Ligates lysine onto the cytidine present at position 34 of the AUA codon-specific tRNA(Ile) that contains the anticodon CAU, in an ATP-dependent manner. Cytidine is converted to lysidine, thus changing the amino acid specificity of the tRNA from methionine to isoleucine. This chain is tRNA(Ile)-lysidine synthase, found in Legionella pneumophila subsp. pneumophila (strain Philadelphia 1 / ATCC 33152 / DSM 7513).